The following is a 276-amino-acid chain: Probable endonuclease 4 (276 aa).

The Zn(2+) site is built by H70, H108, E144, D177, H180, H211, D224, H226, and E256.

Belongs to the AP endonuclease 2 family. Zn(2+) is required as a cofactor.

The enzyme catalyses Endonucleolytic cleavage to 5'-phosphooligonucleotide end-products.. Endonuclease IV plays a role in DNA repair. It cleaves phosphodiester bonds at apurinic or apyrimidinic (AP) sites, generating a 3'-hydroxyl group and a 5'-terminal sugar phosphate. The sequence is that of Probable endonuclease 4 from Metamycoplasma arthritidis (strain 158L3-1) (Mycoplasma arthritidis).